The sequence spans 165 residues: Bark lectin isoform 2 (165 aa).

2 N-linked (GlcNAc...) asparagine glycosylation sites follow: Asn-27 and Asn-57. 2 disulfide bridges follow: Cys-33-Cys-80 and Cys-126-Cys-133.

Belongs to the protease inhibitor I3 (leguminous Kunitz-type inhibitor) family. As to quaternary structure, dimer.

In terms of biological role, glucose and N-acetylglucosamine binding lectin. Has hemagglutinating activity against human and rabbit erythrocytes which does not require divalent cations. Inhibits factor Xa and, to a lesser extent, trypsin. Does not inhibit neutrophil elastase, human plasma kallikrein, papain, human plasmin, porcine pancreatic kallikrein and bovin chymotrypsin. Has insecticidal activity against the termite species N.corniger. Induces apoptosis in prostrate cancer cell lines DU145 and PC3. In Crateva tapia (Garlic-pear tree), this protein is Bark lectin isoform 2.